Here is a 513-residue protein sequence, read N- to C-terminus: Anthranilate synthase component 1 (513 aa).

Residues serine 50 and 279–281 (PYM) each bind L-tryptophan. Residue 314-315 (GT) participates in chorismate binding. Glutamate 341 is a binding site for Mg(2+). Residues tyrosine 429, arginine 449, 463–465 (GAG), and glycine 465 contribute to the chorismate site. Glutamate 478 is a Mg(2+) binding site.

It belongs to the anthranilate synthase component I family. Heterotetramer consisting of two non-identical subunits: a beta subunit (TrpG) and a large alpha subunit (TrpE). Requires Mg(2+) as cofactor.

The catalysed reaction is chorismate + L-glutamine = anthranilate + pyruvate + L-glutamate + H(+). The protein operates within amino-acid biosynthesis; L-tryptophan biosynthesis; L-tryptophan from chorismate: step 1/5. With respect to regulation, feedback inhibited by tryptophan. Part of a heterotetrameric complex that catalyzes the two-step biosynthesis of anthranilate, an intermediate in the biosynthesis of L-tryptophan. In the first step, the glutamine-binding beta subunit (TrpG) of anthranilate synthase (AS) provides the glutamine amidotransferase activity which generates ammonia as a substrate that, along with chorismate, is used in the second step, catalyzed by the large alpha subunit of AS (TrpE) to produce anthranilate. In the absence of TrpG, TrpE can synthesize anthranilate directly from chorismate and high concentrations of ammonia. This is Anthranilate synthase component 1 (trpE) from Bacillus pumilus (Bacillus mesentericus).